Consider the following 112-residue polypeptide: Serum amyloid A protein (112 aa).

Q1 bears the Pyrrolidone carboxylic acid mark. Over residues 75-86 the composition is skewed to basic and acidic residues; it reads MTRDQVREDTKA. The interval 75–112 is disordered; it reads MTRDQVREDTKADQFANEWGRSGKDPNHFRPPGLPDKY.

The protein belongs to the SAA family. Expressed by the liver; secreted in plasma.

Its subcellular location is the secreted. In terms of biological role, major acute phase reactant. Apolipoprotein of the HDL complex. The protein is Serum amyloid A protein (SAA1) of Ovis aries (Sheep).